Here is a 71-residue protein sequence, read N- to C-terminus: Protein MMP24OS (71 aa).

Gly residues predominate over residues 1-10 (MGAQLSGGRG). The tract at residues 1–61 (MGAQLSGGRG…PSPWGPLDDV (61 aa)) is disordered. Over residues 36 to 55 (HPPQPQPQPQPQPQPEPSPW) the composition is skewed to pro residues.

This chain is Protein MMP24OS, found in Homo sapiens (Human).